The primary structure comprises 1273 residues: Kinesin-like protein KIN-14A (1273 aa).

The tract at residues 1-52 (MADQRSKTNRWNWEVSGFEPRKSSSNASFAESTGHRTTGPLLRRNSISTPSL) is disordered. A coiled-coil region spans residues 59 to 89 (ASKVNGLKEKVKLAKEDYLELRQEATDLQEY). Positions 142-456 (NIKVFCRARP…LNYAARARNT (315 aa)) constitute a Kinesin motor domain. 223-230 (GQTNAGKT) contacts ATP. Coiled-coil stretches lie at residues 466–511 (IKKW…CVLL), 559–595 (QLDQ…AVRS), and 627–657 (TKKL…RLTE). Disordered stretches follow at residues 827-847 (KPNT…RSPV) and 1136-1157 (QEDT…SISS). Positions 830–846 (TGRSKSTSRGSSPGRSP) are enriched in low complexity.

It belongs to the TRAFAC class myosin-kinesin ATPase superfamily. Kinesin family. KIN-14 subfamily. In terms of assembly, homodimer and heterodimer with KCA2. Interacts with CDKA-1. Interacts with AL1, a geminivirus (TGMV) protein essential for viral replication. Interacts with LUE1/KSS. Part of the phosphorylation is not CDK-dependent. Widely expressed.

The protein localises to the nucleus. Its subcellular location is the cytoplasm. It is found in the cytoskeleton. It localises to the spindle. The protein resides in the chromosome. The protein localises to the cell membrane. Its subcellular location is the phragmoplast. Its function is as follows. Kinesin-like protein required for chloroplast movements and anchor to the plasma membrane. Mediates chloroplast movement via chloroplast actin (cp-actin) filaments. Required for the chloroplast avoidance response under high intensity blue light. Mediates redundantly with CHUP1 the nuclear avoidance response under high intensity blue light. May act as a mitotic kinesin. Probably involved in division plane determination. This Arabidopsis thaliana (Mouse-ear cress) protein is Kinesin-like protein KIN-14A.